The sequence spans 687 residues: TWiK family of potassium channels protein 12 (687 aa).

Residues 1 to 21 (MTLFQKLQWFCQLIRLRAYYK) lie on the Cytoplasmic side of the membrane. The chain crosses the membrane as a helical span at residues 22 to 42 (FLLLIAYTLFGAWLFRFYELQ). N-linked (GlcNAc...) asparagine glycans are attached at residues Asn-53, Asn-77, and Asn-98. The pore-forming intramembrane region spans 112-132 (WTWTGAMFYAGQLYTTIGYGY). Residues 142–162 (ICTVLYALFGIPCFLMYLKAI) form a helical membrane-spanning segment. Over 163–212 (GKTLSKRLKKIYKRVRRSAFGKFLLPTRVTATKDGFEDPDASAEERKRKP) the chain is Cytoplasmic. The helical transmembrane segment at 213–233 (FPIPIAIILLIIWICFSASMF) threads the bilayer. The pore-forming intramembrane region spans 242-262 (FPSAVYFFIVSISTVGLGDML). The helical transmembrane segment at 270–290 (VFNFLLILFGLALLSMCFELI) threads the bilayer. Over 291–687 (TDRIAKWKQK…SKRDAPVNIV (397 aa)) the chain is Cytoplasmic. Residues 661 to 687 (SPSTSTSTSMIDSGYDLSKRDAPVNIV) are disordered. The span at 677–687 (LSKRDAPVNIV) shows a compositional bias: basic and acidic residues.

This sequence belongs to the two pore domain potassium channel (TC 1.A.1.8) family.

The protein localises to the membrane. The protein is TWiK family of potassium channels protein 12 of Caenorhabditis briggsae.